The primary structure comprises 146 residues: MSSERTFLPNGNYKIKSLFSDSLYLTYSSGSLSFLNTSSLDNQKWKLEYISSSNGFRFSNVAEPNKYLAYNDYGFIYLSSSSNNSLWNPIKIAINSYIICTLSIVNVTDYAWTIYDNNNNITDQPILNLPNFDINNSNQILKLEKL.

In terms of assembly, botulinum toxins are produced as large progenitor toxins of 12S (M toxin, about 280 kDa) and 16S (L toxin, about 650 kDa). M toxin consists of a non-toxic, non-hemagglutinin component (NTNHA) and the neurotoxin (BoNT/D). L toxin consists of the M toxin and the 3 hemagglutinin (HA) subcomponents of 70, 33, and 17 kDa. The stoichiometry of the whole complex has been modeled as one BoNT/D, one NTNHA, three HA-70, six HA-33 and three HA-17. HA-33 and HA-17 crystallize as a heterotrimer with two HA-33 and one HA-17.

It is found in the secreted. Its function is as follows. The hemagglutinin (HA) component of the progenitor toxin protects the structural integrity of the neurotoxin; may increase internalization of the neurotoxin into the bloodstream of the host. Involved in binding to the small intestine through interactions with glycolipids and glycoproteins containing sialic acid moieties. The hemagglutinin complex composed of HA-70, HA-33 and HA-17 agglutinates erythrocytes, whereas the individual compenents do not. Erythrocyte agglutination also occurs with the entire toxin complex. This chain is Hemagglutinin component HA-17 type D, found in Clostridium botulinum D phage (Clostridium botulinum D bacteriophage).